Reading from the N-terminus, the 317-residue chain is GTPase Era (317 aa).

One can recognise an Era-type G domain in the interval 17-190 (RAGFACFVGR…ADLLTPLLPE (174 aa)). Residues 25–32 (GRPNAGKS) are G1. 25 to 32 (GRPNAGKS) lines the GTP pocket. The segment at 51 to 55 (QTTRH) is G2. Positions 72–75 (DTPG) are G3. Residues 72 to 76 (DTPGL) and 135 to 138 (TKTD) each bind GTP. The G4 stretch occupies residues 135–138 (TKTD). Positions 169–171 (VSA) are G5. Residues 221 to 303 (VRDELPHSIA…FLDLHVKVAK (83 aa)) enclose the KH type-2 domain.

It belongs to the TRAFAC class TrmE-Era-EngA-EngB-Septin-like GTPase superfamily. Era GTPase family. Monomer.

It is found in the cytoplasm. The protein resides in the cell membrane. Functionally, an essential GTPase that binds both GDP and GTP, with rapid nucleotide exchange. Plays a role in 16S rRNA processing and 30S ribosomal subunit biogenesis and possibly also in cell cycle regulation and energy metabolism. The protein is GTPase Era of Streptomyces coelicolor (strain ATCC BAA-471 / A3(2) / M145).